The primary structure comprises 273 residues: Rhamnulose-1-phosphate aldolase (273 aa).

The active site involves Glu117. Zn(2+)-binding residues include His140, His142, and His211.

This sequence belongs to the aldolase class II family. RhaD subfamily. Zn(2+) is required as a cofactor.

The protein resides in the cytoplasm. The enzyme catalyses L-rhamnulose 1-phosphate = (S)-lactaldehyde + dihydroxyacetone phosphate. The protein operates within carbohydrate degradation; L-rhamnose degradation; glycerone phosphate from L-rhamnose: step 3/3. In terms of biological role, catalyzes the reversible cleavage of L-rhamnulose-1-phosphate to dihydroxyacetone phosphate (DHAP) and L-lactaldehyde. In Listeria monocytogenes serotype 4a (strain HCC23), this protein is Rhamnulose-1-phosphate aldolase.